A 201-amino-acid chain; its full sequence is LexA repressor 1 (201 aa).

Residues 27-47 constitute a DNA-binding region (H-T-H motif); sequence LAEIAQAFGFASRNAAQKHVQ. Residues S122 and K159 each act as for autocatalytic cleavage activity in the active site.

Belongs to the peptidase S24 family. In terms of assembly, homodimer.

The catalysed reaction is Hydrolysis of Ala-|-Gly bond in repressor LexA.. Its function is as follows. Represses a number of genes involved in the response to DNA damage (SOS response), including recA and lexA. In the presence of single-stranded DNA, RecA interacts with LexA causing an autocatalytic cleavage which disrupts the DNA-binding part of LexA, leading to derepression of the SOS regulon and eventually DNA repair. This Xanthomonas oryzae pv. oryzae (strain KACC10331 / KXO85) protein is LexA repressor 1.